The primary structure comprises 522 residues: Lysine--tRNA ligase (522 aa).

Residues 44–52 carry the 'HIGH' region motif; it reads PSGLPHIGT. The 'KMSKS' region signature appears at 290-294; it reads KISKS. Position 293 (Lys-293) interacts with ATP.

This sequence belongs to the class-I aminoacyl-tRNA synthetase family.

It is found in the cytoplasm. The enzyme catalyses tRNA(Lys) + L-lysine + ATP = L-lysyl-tRNA(Lys) + AMP + diphosphate. This chain is Lysine--tRNA ligase, found in Rickettsia conorii (strain ATCC VR-613 / Malish 7).